The chain runs to 475 residues: UDP-N-acetylmuramate--L-alanine ligase (475 aa).

Position 125–131 (125–131 (GTHGKTT)) interacts with ATP.

The protein belongs to the MurCDEF family.

Its subcellular location is the cytoplasm. The enzyme catalyses UDP-N-acetyl-alpha-D-muramate + L-alanine + ATP = UDP-N-acetyl-alpha-D-muramoyl-L-alanine + ADP + phosphate + H(+). It participates in cell wall biogenesis; peptidoglycan biosynthesis. In terms of biological role, cell wall formation. This chain is UDP-N-acetylmuramate--L-alanine ligase, found in Actinobacillus pleuropneumoniae serotype 5b (strain L20).